The primary structure comprises 404 residues: Cysteine desulfurase IscS (404 aa).

Pyridoxal 5'-phosphate contacts are provided by residues 75-76 (AT), N155, Q183, and 203-205 (SAH). N6-(pyridoxal phosphate)lysine is present on K206. Residue T243 participates in pyridoxal 5'-phosphate binding. C328 (cysteine persulfide intermediate) is an active-site residue. C328 serves as a coordination point for [2Fe-2S] cluster.

It belongs to the class-V pyridoxal-phosphate-dependent aminotransferase family. NifS/IscS subfamily. As to quaternary structure, homodimer. Forms a heterotetramer with IscU, interacts with other sulfur acceptors. Pyridoxal 5'-phosphate serves as cofactor.

Its subcellular location is the cytoplasm. The enzyme catalyses (sulfur carrier)-H + L-cysteine = (sulfur carrier)-SH + L-alanine. It participates in cofactor biosynthesis; iron-sulfur cluster biosynthesis. Its function is as follows. Master enzyme that delivers sulfur to a number of partners involved in Fe-S cluster assembly, tRNA modification or cofactor biosynthesis. Catalyzes the removal of elemental sulfur atoms from cysteine to produce alanine. Functions as a sulfur delivery protein for Fe-S cluster synthesis onto IscU, an Fe-S scaffold assembly protein, as well as other S acceptor proteins. This chain is Cysteine desulfurase IscS, found in Pseudomonas aeruginosa (strain LESB58).